A 412-amino-acid chain; its full sequence is MKIRTLSGSVLEPPSAVRATPGTSMLKLEPGGSTIPKIPFIRPSFPGPAELAEDFVQIAQANWYTNFGPNERRFARALRDYLGPHLHVATLANGTLALLAALHVSFGAGTRDRYLLMPSFTFVGVAQAALWTGYRPWFIDIDANTWQPCVHSACAVIERFRDRIAGILLANVFGVGNPQISVWEELAAEWELPIVLDSAAGFGSTYADGERLGGRGACEIFSFHATKPFAVGEGGALVSRDPRLVEHAYKFQNFGLVQTRESIQLGMNGKLSEISAAIGLRQLVGLDRRLASRRKVLECYRTGMADAGVRFQDNANVASLCFASACCTSADHKAAVLGSLRRHAIEARDYYNPPQHRHPYFVTNAELVESTDLAVTADICSRIVSLPVHDHMAPDDVARVVAAVQEAEVRGE.

Lys-227 bears the N6-(pyridoxal phosphate)lysine mark.

The protein belongs to the DegT/DnrJ/EryC1 family.

This is Protein Mb3436c from Mycobacterium bovis (strain ATCC BAA-935 / AF2122/97).